Consider the following 609-residue polypeptide: Manganese lipoxygenase (609 aa).

The N-terminal stretch at 1-16 (MRLLLSIAGLTTVVNA) is a signal peptide. N-linked (GlcNAc...) asparagine glycosylation is found at Asn24, Asn115, Asn156, and Asn193. One can recognise a Lipoxygenase domain in the interval 117 to 609 (SLKAIQDHGG…PGVIPFYLSV (493 aa)). Positions 289 and 294 each coordinate Mn(2+). Asn385 is a glycosylation site (N-linked (GlcNAc...) asparagine). Residues His474 and Asn478 each coordinate Mn(2+). Asn539 carries N-linked (GlcNAc...) asparagine glycosylation. Val609 contacts Mn(2+).

The protein belongs to the lipoxygenase family. Manganese lipoxygenase subfamily. The cofactor is Mn(2+). N- and O-glycosylated.

Its subcellular location is the secreted. It catalyses the reaction (9Z,12Z)-octadecadienoate + O2 = (9S)-hydroperoxy-(10E,12Z)-octadecadienoate. The catalysed reaction is (9Z,12Z)-octadecadienoate + O2 = (11S)-hydroperoxy-(9Z,12Z)-octadecadienoate. It carries out the reaction (9Z,12Z)-octadecadienoate + O2 = (13R)-hydroperoxy-(9Z,11E)-octadecadienoate. The enzyme catalyses (9Z,12Z,15Z)-octadecatrienoate + O2 = (11R)-hydroperoxy-(9Z,12Z,15Z)-octadecatrienoate. Functionally, lipoxygenase that metabolizes linoleic and alpha-linolenic acids to 9-, 11- and 13-hydroperoxy fatty acids. Oxidizes linoleic acid to mainly 9S- and 13R-HPODE and alpha-linolenic acid to 11R-HPOTrE. This Colletotrichum gloeosporioides (strain Cg-14) (Anthracnose fungus) protein is Manganese lipoxygenase.